Reading from the N-terminus, the 442-residue chain is Endothelin receptor type B (442 aa).

The signal sequence occupies residues 1–26; the sequence is MQSSASRCGRALVALLLACGLLGVWG. At 27-101 the chain is on the extracellular side; that stretch reads EKRGFPPAQA…RKIEINKTFK (75 aa). N-linked (GlcNAc...) asparagine glycans are attached at residues Asn60 and Asn97. The helical transmembrane segment at 102–126 threads the bilayer; it reads YINTIVSCLVFVLGIIGNSTLLRII. Residues 127–137 lie on the Cytoplasmic side of the membrane; that stretch reads YKNKCMRNGPN. The chain crosses the membrane as a helical span at residues 138-163; it reads ILIASLALGDLLHIIIDIPINAYKLL. At 164–175 the chain is on the extracellular side; sequence AGDWPFGAEMCK. Cys174 and Cys255 are joined by a disulfide. Residues 176–197 form a helical membrane-spanning segment; the sequence is LVPFIQKASVGITVLSLCALSI. Residues 198 to 218 are Cytoplasmic-facing; sequence DRYRAVASWSRIKGIGVPKWT. Residues 219 to 243 traverse the membrane as a helical segment; that stretch reads AVEIVLIWVVSVVLAVPEAIGFDVI. The Extracellular portion of the chain corresponds to 244–271; the sequence is TSDYKGKPLRVCMLNPFQKTAFMQFYKT. Residues 272–296 form a helical membrane-spanning segment; sequence AKDWWLFSFYFCLPLAITAIFYTLM. The Cytoplasmic portion of the chain corresponds to 297–324; sequence TCEMLRKKSGMQIALNDHLKQRREVAKT. Ser305 bears the Phosphoserine mark. Residues 325-350 form a helical membrane-spanning segment; that stretch reads VFCLVLVFALCWLPLHLSRILKLTLY. The Extracellular segment spans residues 351–362; sequence DQSNPQRCELLS. Residues 363-389 form a helical membrane-spanning segment; that stretch reads FLLVLDYIGINMASLNSCINPIALYLV. Residues 390–442 lie on the Cytoplasmic side of the membrane; sequence SKRFKNCFKSCLCCWCQTFEEKQSLEEKQSCLKFKANDHGYDNFRSSNKYSSS. S-palmitoyl cysteine attachment occurs at residues Cys402, Cys403, and Cys405. Residue Ser419 is modified to Phosphoserine. Tyr439 is modified (phosphotyrosine). Phosphoserine is present on residues Ser440, Ser441, and Ser442.

This sequence belongs to the G-protein coupled receptor 1 family. Endothelin receptor subfamily. EDNRB sub-subfamily. Widely distributed in cell types of a variety of tissues.

The protein resides in the cell membrane. Functionally, non-specific receptor for endothelin 1, 2, and 3. Mediates its action by association with G proteins that activate a phosphatidylinositol-calcium second messenger system. In Rattus norvegicus (Rat), this protein is Endothelin receptor type B.